The sequence spans 181 residues: Vacuolar ATPase assembly protein VMA22 (181 aa).

Ser-2 is subject to N-acetylalanine. 2 stretches are compositionally biased toward basic and acidic residues: residues Ala-93–Leu-107 and Thr-114–Lys-125. The interval Ala-93–Lys-125 is disordered.

Functionally, required for V-ATPase activity. The sequence is that of Vacuolar ATPase assembly protein VMA22 (VMA22) from Saccharomyces cerevisiae (strain ATCC 204508 / S288c) (Baker's yeast).